Consider the following 460-residue polypeptide: ATP synthase subunit beta (460 aa).

Position 150-157 (150-157) interacts with ATP; it reads GGAGVGKT.

It belongs to the ATPase alpha/beta chains family. In terms of assembly, F-type ATPases have 2 components, CF(1) - the catalytic core - and CF(0) - the membrane proton channel. CF(1) has five subunits: alpha(3), beta(3), gamma(1), delta(1), epsilon(1). CF(0) has three main subunits: a(1), b(2) and c(9-12). The alpha and beta chains form an alternating ring which encloses part of the gamma chain. CF(1) is attached to CF(0) by a central stalk formed by the gamma and epsilon chains, while a peripheral stalk is formed by the delta and b chains.

Its subcellular location is the cell inner membrane. The catalysed reaction is ATP + H2O + 4 H(+)(in) = ADP + phosphate + 5 H(+)(out). Functionally, produces ATP from ADP in the presence of a proton gradient across the membrane. The catalytic sites are hosted primarily by the beta subunits. The chain is ATP synthase subunit beta from Sodalis glossinidius (strain morsitans).